Consider the following 145-residue polypeptide: AP-2 complex subunit sigma (145 aa).

The protein belongs to the adaptor complexes small subunit family. Adaptor protein complex 2 (AP-2) is a heterotetramer composed of two large adaptins (alpha-type subunit apl3 and beta-type subunit apl1), a medium chain (mu-type subunit apm4) and a small adaptin (sigma-type subunit aps2).

It is found in the cell membrane. It localises to the membrane. The protein resides in the coated pit. Its function is as follows. Component of the adaptor complexes which link clathrin to receptors in coated vesicles. Clathrin-associated protein complexes are believed to interact with the cytoplasmic tails of membrane proteins, leading to their selection and concentration. The chain is AP-2 complex subunit sigma (aps2) from Emericella nidulans (strain FGSC A4 / ATCC 38163 / CBS 112.46 / NRRL 194 / M139) (Aspergillus nidulans).